The primary structure comprises 386 residues: Phosphoglycerate kinase (386 aa).

Substrate-binding positions include 21–23, R36, 59–62, R112, and R145; these read DLN and HLGR. Residues K196, E313, and 339 to 342 contribute to the ATP site; that span reads GGDT.

The protein belongs to the phosphoglycerate kinase family. In terms of assembly, monomer.

Its subcellular location is the cytoplasm. It catalyses the reaction (2R)-3-phosphoglycerate + ATP = (2R)-3-phospho-glyceroyl phosphate + ADP. It functions in the pathway carbohydrate degradation; glycolysis; pyruvate from D-glyceraldehyde 3-phosphate: step 2/5. This Haemophilus influenzae (strain ATCC 51907 / DSM 11121 / KW20 / Rd) protein is Phosphoglycerate kinase (pgk).